The sequence spans 247 residues: 23S rRNA (guanosine-2'-O-)-methyltransferase RlmB (247 aa).

Positions 197, 217, and 226 each coordinate S-adenosyl-L-methionine.

The protein belongs to the class IV-like SAM-binding methyltransferase superfamily. RNA methyltransferase TrmH family. RlmB subfamily.

Its subcellular location is the cytoplasm. It carries out the reaction guanosine(2251) in 23S rRNA + S-adenosyl-L-methionine = 2'-O-methylguanosine(2251) in 23S rRNA + S-adenosyl-L-homocysteine + H(+). Functionally, specifically methylates the ribose of guanosine 2251 in 23S rRNA. The polypeptide is 23S rRNA (guanosine-2'-O-)-methyltransferase RlmB (Vibrio parahaemolyticus serotype O3:K6 (strain RIMD 2210633)).